The following is a 233-amino-acid chain: C-type lectin domain family 2 member D6 (233 aa).

Residues 1–45 (MPSSAHLQDSPPLLSRTLTQNEGQTSLRQSSSCGPSATSASESLS) are disordered. The Cytoplasmic portion of the chain corresponds to 1–73 (MPSSAHLQDS…GIILPESPAK (73 aa)). The segment covering 16 to 29 (RTLTQNEGQTSLRQ) has biased composition (polar residues). The segment covering 30 to 43 (SSSCGPSATSASES) has biased composition (low complexity). The chain crosses the membrane as a helical; Signal-anchor for type II membrane protein span at residues 74–94 (LLCCCAVIVVLSVAVVALSVA). Topologically, residues 95-233 (LSVKKTPQIS…KLNSYTSQCQ (139 aa)) are extracellular. In terms of domain architecture, C-type lectin spans 119–230 (VGNKCYYFNE…ICSKLNSYTS (112 aa)). N-linked (GlcNAc...) asparagine glycosylation occurs at asparagine 132.

Its subcellular location is the cell membrane. Functionally, lectin-type cell surface receptor. This Rattus norvegicus (Rat) protein is C-type lectin domain family 2 member D6 (Clec2d6).